Here is a 385-residue protein sequence, read N- to C-terminus: Linearmycin resistance permease protein LnrN (385 aa).

6 helical membrane-spanning segments follow: residues tyrosine 22–glycine 42, alanine 198–leucine 218, isoleucine 239–leucine 259, alanine 274–isoleucine 294, leucine 305–isoleucine 325, and aspartate 360–leucine 380. Positions lysine 163 to alanine 382 constitute an ABC transmembrane type-2 domain.

The protein belongs to the ABC-2 integral membrane protein family. The complex is composed of two ATP-binding proteins (LnrL) and two transmembrane proteins (LnrM and LnrN).

Its subcellular location is the cell membrane. Required for resistance to linearmycins, a family of antibiotic-specialized metabolites produced by some streptomycetes. Part of the ABC transporter complex LnrLMN that probably facilitates linearmycin removal from the membrane. Responsible for the translocation of the substrate across the membrane. Also mediates KinC-dependent biofilm morphology. In Bacillus subtilis (strain 168), this protein is Linearmycin resistance permease protein LnrN.